The following is a 421-amino-acid chain: Histidine--tRNA ligase (421 aa).

This sequence belongs to the class-II aminoacyl-tRNA synthetase family. In terms of assembly, homodimer.

Its subcellular location is the cytoplasm. It carries out the reaction tRNA(His) + L-histidine + ATP = L-histidyl-tRNA(His) + AMP + diphosphate + H(+). The protein is Histidine--tRNA ligase of Francisella tularensis subsp. novicida (strain U112).